Here is a 171-residue protein sequence, read N- to C-terminus: uncharacterized protein (171 aa).

This is an uncharacterized protein from Rhizobium etli.